The chain runs to 211 residues: Envelope protein UL45 homolog (211 aa).

Residues 1-46 (MMSPTPEDDRDLVVVRGRLRMMDNGAEHDRERRSYTAWPHLCCGCT) are Intravirion-facing. A helical; Signal-anchor for type II membrane protein membrane pass occupies residues 47-67 (IGIILTMFVIATTLLLASLFA). Topologically, residues 68–211 (FSYMSLESGT…SSILSNAIMK (144 aa)) are virion surface. Residues Asn-96 and Asn-133 are each glycosylated (N-linked (GlcNAc...) asparagine; by host).

The protein belongs to the herpesviridae HHV-1 UL45 family.

Its subcellular location is the virion membrane. In Gallid herpesvirus 2 (strain Chicken/Md5/ATCC VR-987) (GaHV-2), this protein is Envelope protein UL45 homolog (UL45H).